The chain runs to 81 residues: Putative membrane protein insertion efficiency factor (81 aa).

This sequence belongs to the UPF0161 family.

Its subcellular location is the cell membrane. In terms of biological role, could be involved in insertion of integral membrane proteins into the membrane. The protein is Putative membrane protein insertion efficiency factor of Geobacillus kaustophilus (strain HTA426).